A 329-amino-acid chain; its full sequence is Phosphate acyltransferase (329 aa).

This sequence belongs to the PlsX family. In terms of assembly, homodimer. Probably interacts with PlsY.

The protein localises to the cytoplasm. It carries out the reaction a fatty acyl-[ACP] + phosphate = an acyl phosphate + holo-[ACP]. It functions in the pathway lipid metabolism; phospholipid metabolism. Its function is as follows. Catalyzes the reversible formation of acyl-phosphate (acyl-PO(4)) from acyl-[acyl-carrier-protein] (acyl-ACP). This enzyme utilizes acyl-ACP as fatty acyl donor, but not acyl-CoA. This is Phosphate acyltransferase from Campylobacter concisus (strain 13826).